Consider the following 210-residue polypeptide: Putative methyltransferase ECU09_1500 (210 aa).

This sequence belongs to the methyltransferase superfamily.

The sequence is that of Putative methyltransferase ECU09_1500 from Encephalitozoon cuniculi (strain GB-M1) (Microsporidian parasite).